Consider the following 88-residue polypeptide: UPF0298 protein BA_4142/GBAA_4142/BAS3844 (88 aa).

The protein belongs to the UPF0298 family.

The protein resides in the cytoplasm. This is UPF0298 protein BA_4142/GBAA_4142/BAS3844 from Bacillus anthracis.